Here is a 443-residue protein sequence, read N- to C-terminus: COP9 signalosome complex subunit 2 (443 aa).

The region spanning 254-416 (AHTDFFEAFK…QLLELDHQKR (163 aa)) is the PCI domain.

Belongs to the CSN2 family. In terms of assembly, component of the CSN complex, probably composed of cops1, cops2, cops3, cops4, cops5, cops6, cops7, cops8 and cops9.

It is found in the cytoplasm. The protein resides in the nucleus. In terms of biological role, essential component of the COP9 signalosome complex (CSN), a complex involved in various cellular and developmental processes. The CSN complex is an essential regulator of the ubiquitin (Ubl) conjugation pathway by mediating the deneddylation of the cullin subunits of E3 ligase complexes, leading to modify the Ubl ligase activity. In Danio rerio (Zebrafish), this protein is COP9 signalosome complex subunit 2 (cops2).